A 546-amino-acid polypeptide reads, in one-letter code: Chaperonin GroEL (546 aa).

ATP is bound by residues 29 to 32 (TLGP), Lys-50, 86 to 90 (DGTTT), Gly-414, 477 to 479 (NAL), and Asp-493. Residues 522 to 546 (KPEKDAPNPMAGMGGGGMGGMGGMM) form a disordered region. A compositionally biased stretch (gly residues) spans 533–546 (GMGGGGMGGMGGMM).

It belongs to the chaperonin (HSP60) family. Forms a cylinder of 14 subunits composed of two heptameric rings stacked back-to-back. Interacts with the co-chaperonin GroES.

The protein localises to the cytoplasm. The catalysed reaction is ATP + H2O + a folded polypeptide = ADP + phosphate + an unfolded polypeptide.. In terms of biological role, together with its co-chaperonin GroES, plays an essential role in assisting protein folding. The GroEL-GroES system forms a nano-cage that allows encapsulation of the non-native substrate proteins and provides a physical environment optimized to promote and accelerate protein folding. The polypeptide is Chaperonin GroEL (Leptospira borgpetersenii serovar Hardjo-bovis (strain JB197)).